Reading from the N-terminus, the 213-residue chain is Thymidylate kinase (213 aa).

Position 10-17 (10-17 (GLEGAGKT)) interacts with ATP.

The protein belongs to the thymidylate kinase family.

The catalysed reaction is dTMP + ATP = dTDP + ADP. Its function is as follows. Phosphorylation of dTMP to form dTDP in both de novo and salvage pathways of dTTP synthesis. This chain is Thymidylate kinase, found in Salmonella arizonae (strain ATCC BAA-731 / CDC346-86 / RSK2980).